A 405-amino-acid chain; its full sequence is Tryptophan synthase beta chain (405 aa).

K98 carries the post-translational modification N6-(pyridoxal phosphate)lysine.

This sequence belongs to the TrpB family. As to quaternary structure, tetramer of two alpha and two beta chains. Requires pyridoxal 5'-phosphate as cofactor.

The enzyme catalyses (1S,2R)-1-C-(indol-3-yl)glycerol 3-phosphate + L-serine = D-glyceraldehyde 3-phosphate + L-tryptophan + H2O. The protein operates within amino-acid biosynthesis; L-tryptophan biosynthesis; L-tryptophan from chorismate: step 5/5. Its function is as follows. The beta subunit is responsible for the synthesis of L-tryptophan from indole and L-serine. This Xanthomonas oryzae pv. oryzae (strain MAFF 311018) protein is Tryptophan synthase beta chain.